A 317-amino-acid polypeptide reads, in one-letter code: Melanocyte-stimulating hormone receptor (317 aa).

The Extracellular segment spans residues 1–37 (MPLQGPQRRLLGSLNSTLPATPYLGLTTNQTEPPCLE). N29 carries N-linked (GlcNAc...) asparagine glycosylation. A helical transmembrane segment spans residues 38–63 (VSIPDGLFLSLGLVSLVENVLVVTAI). Over 64–72 (AKNRNLHSP) the chain is Cytoplasmic. The helical transmembrane segment at 73-93 (MYYFICCLAVSDLLVSMSNVL) threads the bilayer. Residues 94–118 (EMAILLLLEAGVLATQASVLQQLDN) lie on the Extracellular side of the membrane. Residues 119–140 (IIDVLICGSMVSSLCFLGSIAV) traverse the membrane as a helical segment. Residues 141-163 (DRYISIFYALRYHSIMMLPRVWR) lie on the Cytoplasmic side of the membrane. A helical membrane pass occupies residues 164–183 (AIVAIWVVSVLSSTLFIAYY). Residues 184–191 (NHTAVLLC) are Extracellular-facing. The chain crosses the membrane as a helical span at residues 192 to 211 (LVTFFVAMLVLMAVLYVHML). Over 212 to 240 (ARACQHARGIARLHKRQHPIHQGFGLKGA) the chain is Cytoplasmic. The chain crosses the membrane as a helical span at residues 241–266 (ATLTILLGVFFLCWGPFFLHLSLLIL). Residues 267–279 (CPQHPTCGCVFKN) lie on the Extracellular side of the membrane. Residues 280 to 300 (FKLFLTLILCSAIVDPLIYAF) traverse the membrane as a helical segment. The Cytoplasmic segment spans residues 301-317 (RSQELRKTLQEVLLCSW). A lipid anchor (S-palmitoyl cysteine) is attached at C315.

This sequence belongs to the G-protein coupled receptor 1 family. As to quaternary structure, interacts with MGRN1, but does not undergo MGRN1-mediated ubiquitination; this interaction competes with GNAS-binding and thus inhibits agonist-induced cAMP production. Interacts with OPN3; the interaction results in a decrease in MC1R-mediated cAMP signaling and ultimately a decrease in melanin production in melanocytes.

It localises to the cell membrane. Functionally, receptor for MSH (alpha, beta and gamma) and ACTH. The activity of this receptor is mediated by G proteins which activate adenylate cyclase. Mediates melanogenesis, the production of eumelanin (black/brown) and phaeomelanin (red/yellow), via regulation of cAMP signaling in melanocytes. This chain is Melanocyte-stimulating hormone receptor (MC1R), found in Equus caballus (Horse).